The sequence spans 354 residues: UDP-N-acetylglucosamine--N-acetylmuramyl-(pentapeptide) pyrophosphoryl-undecaprenol N-acetylglucosamine transferase (354 aa).

UDP-N-acetyl-alpha-D-glucosamine-binding positions include 11 to 13 (TAG), Arg164, Ser194, and Gln289.

It belongs to the glycosyltransferase 28 family. MurG subfamily.

The protein localises to the cell membrane. The catalysed reaction is di-trans,octa-cis-undecaprenyl diphospho-N-acetyl-alpha-D-muramoyl-L-alanyl-D-glutamyl-meso-2,6-diaminopimeloyl-D-alanyl-D-alanine + UDP-N-acetyl-alpha-D-glucosamine = di-trans,octa-cis-undecaprenyl diphospho-[N-acetyl-alpha-D-glucosaminyl-(1-&gt;4)]-N-acetyl-alpha-D-muramoyl-L-alanyl-D-glutamyl-meso-2,6-diaminopimeloyl-D-alanyl-D-alanine + UDP + H(+). The protein operates within cell wall biogenesis; peptidoglycan biosynthesis. Functionally, cell wall formation. Catalyzes the transfer of a GlcNAc subunit on undecaprenyl-pyrophosphoryl-MurNAc-pentapeptide (lipid intermediate I) to form undecaprenyl-pyrophosphoryl-MurNAc-(pentapeptide)GlcNAc (lipid intermediate II). The chain is UDP-N-acetylglucosamine--N-acetylmuramyl-(pentapeptide) pyrophosphoryl-undecaprenol N-acetylglucosamine transferase from Clostridium botulinum (strain Loch Maree / Type A3).